Reading from the N-terminus, the 42-residue chain is Photosystem I reaction center subunit IX (42 aa).

Residues 7 to 27 (FLSTAPVLIMALLTFTAGLLI) traverse the membrane as a helical segment.

It belongs to the PsaJ family.

The protein localises to the cellular thylakoid membrane. May help in the organization of the PsaE and PsaF subunits. This chain is Photosystem I reaction center subunit IX, found in Rippkaea orientalis (strain PCC 8801 / RF-1) (Cyanothece sp. (strain PCC 8801)).